We begin with the raw amino-acid sequence, 630 residues long: tRNA uridine 5-carboxymethylaminomethyl modification enzyme MnmG (630 aa).

G13–G18 lines the FAD pocket. Residue G273 to F287 participates in NAD(+) binding.

The protein belongs to the MnmG family. As to quaternary structure, homodimer. Heterotetramer of two MnmE and two MnmG subunits. It depends on FAD as a cofactor.

The protein localises to the cytoplasm. Its function is as follows. NAD-binding protein involved in the addition of a carboxymethylaminomethyl (cmnm) group at the wobble position (U34) of certain tRNAs, forming tRNA-cmnm(5)s(2)U34. The protein is tRNA uridine 5-carboxymethylaminomethyl modification enzyme MnmG of Saccharophagus degradans (strain 2-40 / ATCC 43961 / DSM 17024).